Here is a 230-residue protein sequence, read N- to C-terminus: 2,3-bisphosphoglycerate-dependent phosphoglycerate mutase (230 aa).

Residues R8–N15, T21–G22, R60, E87–Y90, K98, R114–R115, and G183–N184 contribute to the substrate site. Catalysis depends on H9, which acts as the Tele-phosphohistidine intermediate. The active-site Proton donor/acceptor is E87.

This sequence belongs to the phosphoglycerate mutase family. BPG-dependent PGAM subfamily.

The enzyme catalyses (2R)-2-phosphoglycerate = (2R)-3-phosphoglycerate. It functions in the pathway carbohydrate degradation; glycolysis; pyruvate from D-glyceraldehyde 3-phosphate: step 3/5. Catalyzes the interconversion of 2-phosphoglycerate and 3-phosphoglycerate. The polypeptide is 2,3-bisphosphoglycerate-dependent phosphoglycerate mutase (Streptococcus pneumoniae (strain ATCC BAA-255 / R6)).